The sequence spans 396 residues: Elongation factor Tu (396 aa).

The 197-residue stretch at 10 to 206 (KPHVNVGTIG…TMDSYIPEPV (197 aa)) folds into the tr-type G domain. The segment at 19–26 (GHVDHGKT) is G1. 19-26 (GHVDHGKT) contacts GTP. Threonine 26 is a Mg(2+) binding site. The segment at 60 to 64 (GITIS) is G2. The segment at 81-84 (DCPG) is G3. GTP is bound by residues 81 to 85 (DCPGH) and 136 to 139 (NKAD). Positions 136–139 (NKAD) are G4. Residues 174 to 176 (SAL) form a G5 region.

It belongs to the TRAFAC class translation factor GTPase superfamily. Classic translation factor GTPase family. EF-Tu/EF-1A subfamily. Monomer.

The protein localises to the cytoplasm. It carries out the reaction GTP + H2O = GDP + phosphate + H(+). Its function is as follows. GTP hydrolase that promotes the GTP-dependent binding of aminoacyl-tRNA to the A-site of ribosomes during protein biosynthesis. This chain is Elongation factor Tu, found in Legionella pneumophila (strain Lens).